A 200-amino-acid chain; its full sequence is Proteasome subunit beta 2 (200 aa).

Residues M1–G10 constitute a propeptide, removed in mature form; by autocatalysis. The Nucleophile role is filled by T11.

The protein belongs to the peptidase T1B family. The 20S proteasome core is composed of 14 alpha and 14 beta subunits that assemble into four stacked heptameric rings, resulting in a barrel-shaped structure. The two inner rings, each composed of seven catalytic beta subunits, are sandwiched by two outer rings, each composed of seven alpha subunits. The catalytic chamber with the active sites is on the inside of the barrel. Has a gated structure, the ends of the cylinder being occluded by the N-termini of the alpha-subunits. Is capped at one or both ends by the proteasome regulatory ATPase, PAN.

The protein localises to the cytoplasm. The enzyme catalyses Cleavage of peptide bonds with very broad specificity.. The formation of the proteasomal ATPase PAN-20S proteasome complex, via the docking of the C-termini of PAN into the intersubunit pockets in the alpha-rings, triggers opening of the gate for substrate entry. Interconversion between the open-gate and close-gate conformations leads to a dynamic regulation of the 20S proteasome proteolysis activity. Functionally, component of the proteasome core, a large protease complex with broad specificity involved in protein degradation. The chain is Proteasome subunit beta 2 from Caldivirga maquilingensis (strain ATCC 700844 / DSM 13496 / JCM 10307 / IC-167).